The chain runs to 227 residues: Cytochrome c oxidase subunit 2 (227 aa).

The Mitochondrial intermembrane segment spans residues M1–S14. Residues P15–M45 traverse the membrane as a helical segment. Residues L46–Q59 lie on the Mitochondrial matrix side of the membrane. A helical membrane pass occupies residues E60–M87. The Mitochondrial intermembrane portion of the chain corresponds to D88 to L227. Cu cation is bound by residues H161, C196, E198, C200, H204, and M207. E198 contacts Mg(2+).

This sequence belongs to the cytochrome c oxidase subunit 2 family. As to quaternary structure, component of the cytochrome c oxidase (complex IV, CIV), a multisubunit enzyme composed of 14 subunits. The complex is composed of a catalytic core of 3 subunits MT-CO1, MT-CO2 and MT-CO3, encoded in the mitochondrial DNA, and 11 supernumerary subunits COX4I, COX5A, COX5B, COX6A, COX6B, COX6C, COX7A, COX7B, COX7C, COX8 and NDUFA4, which are encoded in the nuclear genome. The complex exists as a monomer or a dimer and forms supercomplexes (SCs) in the inner mitochondrial membrane with NADH-ubiquinone oxidoreductase (complex I, CI) and ubiquinol-cytochrome c oxidoreductase (cytochrome b-c1 complex, complex III, CIII), resulting in different assemblies (supercomplex SCI(1)III(2)IV(1) and megacomplex MCI(2)III(2)IV(2)). Found in a complex with TMEM177, COA6, COX18, COX20, SCO1 and SCO2. Interacts with TMEM177 in a COX20-dependent manner. Interacts with COX20. Interacts with COX16. The cofactor is Cu cation.

Its subcellular location is the mitochondrion inner membrane. The enzyme catalyses 4 Fe(II)-[cytochrome c] + O2 + 8 H(+)(in) = 4 Fe(III)-[cytochrome c] + 2 H2O + 4 H(+)(out). Functionally, component of the cytochrome c oxidase, the last enzyme in the mitochondrial electron transport chain which drives oxidative phosphorylation. The respiratory chain contains 3 multisubunit complexes succinate dehydrogenase (complex II, CII), ubiquinol-cytochrome c oxidoreductase (cytochrome b-c1 complex, complex III, CIII) and cytochrome c oxidase (complex IV, CIV), that cooperate to transfer electrons derived from NADH and succinate to molecular oxygen, creating an electrochemical gradient over the inner membrane that drives transmembrane transport and the ATP synthase. Cytochrome c oxidase is the component of the respiratory chain that catalyzes the reduction of oxygen to water. Electrons originating from reduced cytochrome c in the intermembrane space (IMS) are transferred via the dinuclear copper A center (CU(A)) of subunit 2 and heme A of subunit 1 to the active site in subunit 1, a binuclear center (BNC) formed by heme A3 and copper B (CU(B)). The BNC reduces molecular oxygen to 2 water molecules using 4 electrons from cytochrome c in the IMS and 4 protons from the mitochondrial matrix. The sequence is that of Cytochrome c oxidase subunit 2 (MT-CO2) from Microcebus tavaratra (Northern rufous mouse lemur).